A 307-amino-acid chain; its full sequence is Serine/threonine-protein phosphatase 4 catalytic subunit (307 aa).

The Mn(2+) site is built by Asp-54, His-56, Asp-82, and Asn-114. The Proton donor role is filled by His-115. His-164 and His-238 together coordinate Mn(2+). Leu-307 carries the post-translational modification Leucine methyl ester.

This sequence belongs to the PPP phosphatase family. PP-4 (PP-X) subfamily. Serine/threonine-protein phosphatase 4 (PP4) occurs in different assemblies of the catalytic and one or more regulatory subunits. Mn(2+) is required as a cofactor.

The protein resides in the cytoplasm. It localises to the nucleus. Its subcellular location is the cytoskeleton. The protein localises to the microtubule organizing center. It is found in the centrosome. It catalyses the reaction O-phospho-L-seryl-[protein] + H2O = L-seryl-[protein] + phosphate. The catalysed reaction is O-phospho-L-threonyl-[protein] + H2O = L-threonyl-[protein] + phosphate. Functionally, protein phosphatase that regulates many processes such as microtubule organization at centrosomes. The protein is Serine/threonine-protein phosphatase 4 catalytic subunit (ppp4c) of Xenopus laevis (African clawed frog).